The primary structure comprises 122 residues: Putative TLX1 neighbor protein (122 aa).

The segment at serine 21–glutamine 122 is disordered. Residues leucine 113–glutamine 122 show a composition bias toward gly residues.

This is Putative TLX1 neighbor protein (TLX1NB) from Homo sapiens (Human).